The primary structure comprises 1056 residues: Carbamoyl phosphate synthase large chain (1056 aa).

Positions 1–397 (MPRRTDIKKV…GFKKALRSID (397 aa)) are carboxyphosphate synthetic domain. ATP contacts are provided by Arg-127, Arg-167, Gly-173, Gly-174, Glu-206, Val-208, Glu-213, Gly-239, Val-240, His-241, Gln-282, and Glu-294. An ATP-grasp 1 domain is found at 131–323 (KALMQKIGEP…IARVAAKIAI (193 aa)). Residues Gln-282, Glu-294, and Asn-296 each contribute to the Mg(2+) site. Residues Gln-282, Glu-294, and Asn-296 each coordinate Mn(2+). The oligomerization domain stretch occupies residues 398-530 (TDINTHTNHN…YSTHGVTTDI (133 aa)). Residues 531–919 (IQNDKKKVLI…YKACISADNE (389 aa)) are carbamoyl phosphate synthetic domain. One can recognise an ATP-grasp 2 domain in the interval 661–852 (SELLDALKIP…LAKVAAKVMI (192 aa)). ATP contacts are provided by Arg-697, Ser-736, Leu-738, Glu-743, Gly-768, Val-769, His-770, Ser-771, Gln-811, and Glu-823. Residues Gln-811, Glu-823, and Asn-825 each coordinate Mg(2+). Residues Gln-811, Glu-823, and Asn-825 each contribute to the Mn(2+) site. Residues 918–1056 (NELPIEGNVF…PISHYLSEVE (139 aa)) form the MGS-like domain. Residues 920–1056 (LPIEGNVFIS…PISHYLSEVE (137 aa)) form an allosteric domain region.

The protein belongs to the CarB family. Composed of two chains; the small (or glutamine) chain promotes the hydrolysis of glutamine to ammonia, which is used by the large (or ammonia) chain to synthesize carbamoyl phosphate. Tetramer of heterodimers (alpha,beta)4. It depends on Mg(2+) as a cofactor. Mn(2+) is required as a cofactor.

It carries out the reaction hydrogencarbonate + L-glutamine + 2 ATP + H2O = carbamoyl phosphate + L-glutamate + 2 ADP + phosphate + 2 H(+). It catalyses the reaction hydrogencarbonate + NH4(+) + 2 ATP = carbamoyl phosphate + 2 ADP + phosphate + 2 H(+). It functions in the pathway amino-acid biosynthesis; L-arginine biosynthesis; carbamoyl phosphate from bicarbonate: step 1/1. It participates in pyrimidine metabolism; UMP biosynthesis via de novo pathway; (S)-dihydroorotate from bicarbonate: step 1/3. Large subunit of the glutamine-dependent carbamoyl phosphate synthetase (CPSase). CPSase catalyzes the formation of carbamoyl phosphate from the ammonia moiety of glutamine, carbonate, and phosphate donated by ATP, constituting the first step of 2 biosynthetic pathways, one leading to arginine and/or urea and the other to pyrimidine nucleotides. The large subunit (synthetase) binds the substrates ammonia (free or transferred from glutamine from the small subunit), hydrogencarbonate and ATP and carries out an ATP-coupled ligase reaction, activating hydrogencarbonate by forming carboxy phosphate which reacts with ammonia to form carbamoyl phosphate. The protein is Carbamoyl phosphate synthase large chain of Methanosphaerula palustris (strain ATCC BAA-1556 / DSM 19958 / E1-9c).